Reading from the N-terminus, the 549-residue chain is Probable serine/threonine-protein kinase WNK5 (549 aa).

The region spanning 25–283 (GRFREVLGKG…AKELLADPFL (259 aa)) is the Protein kinase domain. ATP-binding positions include 105–108 (TELF) and Lys155. Residue Asp172 is the Proton acceptor of the active site. The interval 414–490 (ESFGHEDDED…SPAIDDDQNQ (77 aa)) is disordered. The span at 452 to 463 (DDSSNDVIPDMD) shows a compositional bias: acidic residues. Low complexity predominate over residues 467–476 (RSSNRLLNSS). Position 504 is a phosphoserine (Ser504). Residues 525–549 (RGRGFDPNTNELQPQPSSTDFIRRC) form a disordered region. A compositionally biased stretch (polar residues) spans 531–549 (PNTNELQPQPSSTDFIRRC).

The protein belongs to the protein kinase superfamily. Ser/Thr protein kinase family. WNK subfamily. In terms of assembly, interacts with AHK4.

The catalysed reaction is L-seryl-[protein] + ATP = O-phospho-L-seryl-[protein] + ADP + H(+). The enzyme catalyses L-threonyl-[protein] + ATP = O-phospho-L-threonyl-[protein] + ADP + H(+). Functionally, regulates flowering time by modulating the photoperiod pathway. This is Probable serine/threonine-protein kinase WNK5 (WNK5) from Arabidopsis thaliana (Mouse-ear cress).